Consider the following 715-residue polypeptide: Polyribonucleotide nucleotidyltransferase (715 aa).

Positions 488 and 494 each coordinate Mg(2+). A KH domain is found at 555 to 614; the sequence is PKIETIKIPVDKIREVIGSGGKVIREIVEKTGAKIDIGEDGTIKIAAAEQTKIDAAKEWI. Positions 624-692 constitute an S1 motif domain; it reads GQIYTGKVVK…DRGKTRLSMK (69 aa). Positions 692 to 715 are disordered; the sequence is KVVDQETGEDLSKSNEKAEEPADA. The segment covering 701 to 715 has biased composition (basic and acidic residues); that stretch reads DLSKSNEKAEEPADA.

This sequence belongs to the polyribonucleotide nucleotidyltransferase family. The cofactor is Mg(2+).

The protein localises to the cytoplasm. The catalysed reaction is RNA(n+1) + phosphate = RNA(n) + a ribonucleoside 5'-diphosphate. Functionally, involved in mRNA degradation. Catalyzes the phosphorolysis of single-stranded polyribonucleotides processively in the 3'- to 5'-direction. This is Polyribonucleotide nucleotidyltransferase from Phenylobacterium zucineum (strain HLK1).